The sequence spans 203 residues: Pacifastin-like protease inhibitor cvp4 (203 aa).

The N-terminal stretch at 1 to 19 (MGFLACALLVVATAHAATA) is a signal peptide. Pacifastin domains are found at residues 23 to 59 (PETC…CDRN), 85 to 121 (DEPC…CDRN), and 147 to 184 (DESC…CDRY). Cystine bridges form between cysteine 26/cysteine 41, cysteine 36/cysteine 56, cysteine 39/cysteine 51, cysteine 88/cysteine 103, cysteine 98/cysteine 118, and cysteine 101/cysteine 113. A compositionally biased stretch (basic and acidic residues) spans 129-148 (RKYPEPEKWNSEKERKKSDE). The tract at residues 129–150 (RKYPEPEKWNSEKERKKSDESC) is disordered. 3 disulfide bridges follow: cysteine 150–cysteine 165, cysteine 160–cysteine 181, and cysteine 163–cysteine 176.

Belongs to the protease inhibitor I19 family. As to expression, expressed by the venom gland.

It is found in the secreted. Inhibits trypsin activity and prophenoloxidase (PPO) activation, an enzyme essential for both clotting and insect innate immune responses. It does not inhibit activity of chymotrypsin and protease K, and has no effect on phenoloxidase (PO) activity. This is Pacifastin-like protease inhibitor cvp4 from Pimpla hypochondriaca (Parasitoid wasp).